Consider the following 87-residue polypeptide: Small ribosomal subunit protein bS18 (87 aa).

Residues 1 to 10 (MAGKSSGDRR) show a composition bias toward basic and acidic residues. The segment at 1–23 (MAGKSSGDRRKPLRGAKGGKNAA) is disordered.

The protein belongs to the bacterial ribosomal protein bS18 family. Part of the 30S ribosomal subunit. Forms a tight heterodimer with protein bS6.

Functionally, binds as a heterodimer with protein bS6 to the central domain of the 16S rRNA, where it helps stabilize the platform of the 30S subunit. The protein is Small ribosomal subunit protein bS18 of Clavibacter michiganensis subsp. michiganensis (strain NCPPB 382).